Consider the following 186-residue polypeptide: Lipoprotein signal peptidase (186 aa).

Helical transmembrane passes span 8-28 (FFSVFKPGYLAFVAFGLFLDL), 44-64 (IPVLGDFFRLSLTFNTGFVFG), 66-86 (FQDNALPSLFATGFAIVFLIF), and 97-117 (AWGWNFVMAGAFGNFLDKFFV). Residues aspartate 142 and aspartate 164 contribute to the active site. The helical transmembrane segment at 157-177 (WPAFNVADSCVSIGIVILLFT) threads the bilayer.

The protein belongs to the peptidase A8 family.

The protein resides in the cell inner membrane. It carries out the reaction Release of signal peptides from bacterial membrane prolipoproteins. Hydrolyzes -Xaa-Yaa-Zaa-|-(S,diacylglyceryl)Cys-, in which Xaa is hydrophobic (preferably Leu), and Yaa (Ala or Ser) and Zaa (Gly or Ala) have small, neutral side chains.. The protein operates within protein modification; lipoprotein biosynthesis (signal peptide cleavage). Functionally, this protein specifically catalyzes the removal of signal peptides from prolipoproteins. The chain is Lipoprotein signal peptidase from Leptospira biflexa serovar Patoc (strain Patoc 1 / ATCC 23582 / Paris).